The primary structure comprises 434 residues: Glutamyl-tRNA reductase (434 aa).

Substrate-binding positions include 49–52 (TCNR), serine 109, 114–116 (EPQ), and glutamine 120. Cysteine 50 (nucleophile) is an active-site residue. 189-194 (GAGEMC) contributes to the NADP(+) binding site.

Belongs to the glutamyl-tRNA reductase family. Homodimer.

It catalyses the reaction (S)-4-amino-5-oxopentanoate + tRNA(Glu) + NADP(+) = L-glutamyl-tRNA(Glu) + NADPH + H(+). The protein operates within porphyrin-containing compound metabolism; protoporphyrin-IX biosynthesis; 5-aminolevulinate from L-glutamyl-tRNA(Glu): step 1/2. Functionally, catalyzes the NADPH-dependent reduction of glutamyl-tRNA(Glu) to glutamate 1-semialdehyde (GSA). In Geotalea uraniireducens (strain Rf4) (Geobacter uraniireducens), this protein is Glutamyl-tRNA reductase.